The sequence spans 62 residues: Bowman-Birk type proteinase inhibitor (62 aa).

7 disulfides stabilise this stretch: Cys8/Cys61, Cys9/Cys24, Cys12/Cys57, Cys14/Cys22, Cys31/Cys38, Cys35/Cys50, and Cys40/Cys48.

As to quaternary structure, forms a monomer at protein concentrations of below 1 mM. At concentrations of above 2 mM, self-associates.

In terms of biological role, inhibits trypsin but not chymotrypsin. Inhibits the trypsin-like proteinase activity present in larvae of the crop pests Adoxophyes orana, Hyphantria cunea, Lobesia botrana and Ostrinia nubilalis. The chain is Bowman-Birk type proteinase inhibitor from Medicago scutellata (Snail medic).